Reading from the N-terminus, the 501-residue chain is Ribose import ATP-binding protein RbsA (501 aa).

ABC transporter domains follow at residues Leu-5–Lys-241 and Ala-252–Leu-495. Residue Gly-37–Ser-44 coordinates ATP.

Belongs to the ABC transporter superfamily. Ribose importer (TC 3.A.1.2.1) family. The complex is composed of an ATP-binding protein (RbsA), two transmembrane proteins (RbsC) and a solute-binding protein (RbsB).

The protein resides in the cell inner membrane. It carries out the reaction D-ribose(out) + ATP + H2O = D-ribose(in) + ADP + phosphate + H(+). Part of the ABC transporter complex RbsABC involved in ribose import. Responsible for energy coupling to the transport system. This chain is Ribose import ATP-binding protein RbsA, found in Escherichia coli (strain UTI89 / UPEC).